Reading from the N-terminus, the 143-residue chain is Peptide methionine sulfoxide reductase MsrB (143 aa).

The region spanning 5–127 is the MsrB domain; sequence NEELKKKLTP…NSAALRFIPK (123 aa). The active-site Nucleophile is the C116.

It belongs to the MsrB Met sulfoxide reductase family.

It catalyses the reaction L-methionyl-[protein] + [thioredoxin]-disulfide + H2O = L-methionyl-(R)-S-oxide-[protein] + [thioredoxin]-dithiol. This Halalkalibacterium halodurans (strain ATCC BAA-125 / DSM 18197 / FERM 7344 / JCM 9153 / C-125) (Bacillus halodurans) protein is Peptide methionine sulfoxide reductase MsrB.